Reading from the N-terminus, the 286-residue chain is Energy-coupling factor transporter ATP-binding protein EcfA2 (286 aa).

Residues 3–244 (IKVENVSFIY…AERLEKIGLS (242 aa)) enclose the ABC transporter domain. 40–47 (GHTGSGKS) serves as a coordination point for ATP.

Belongs to the ABC transporter superfamily. Energy-coupling factor EcfA family. Forms a stable energy-coupling factor (ECF) transporter complex composed of 2 membrane-embedded substrate-binding proteins (S component), 2 ATP-binding proteins (A component) and 2 transmembrane proteins (T component).

The protein localises to the cell membrane. ATP-binding (A) component of a common energy-coupling factor (ECF) ABC-transporter complex. Unlike classic ABC transporters this ECF transporter provides the energy necessary to transport a number of different substrates. This Caldanaerobacter subterraneus subsp. tengcongensis (strain DSM 15242 / JCM 11007 / NBRC 100824 / MB4) (Thermoanaerobacter tengcongensis) protein is Energy-coupling factor transporter ATP-binding protein EcfA2.